The sequence spans 314 residues: 4-hydroxy-3-methylbut-2-enyl diphosphate reductase (314 aa).

Cysteine 12 provides a ligand contact to [4Fe-4S] cluster. Residues histidine 41 and histidine 74 each coordinate (2E)-4-hydroxy-3-methylbut-2-enyl diphosphate. Positions 41 and 74 each coordinate dimethylallyl diphosphate. Residues histidine 41 and histidine 74 each coordinate isopentenyl diphosphate. Cysteine 96 contacts [4Fe-4S] cluster. Histidine 124 serves as a coordination point for (2E)-4-hydroxy-3-methylbut-2-enyl diphosphate. Histidine 124 is a binding site for dimethylallyl diphosphate. Histidine 124 provides a ligand contact to isopentenyl diphosphate. Glutamate 126 (proton donor) is an active-site residue. Residue threonine 167 coordinates (2E)-4-hydroxy-3-methylbut-2-enyl diphosphate. Residue cysteine 197 coordinates [4Fe-4S] cluster. The (2E)-4-hydroxy-3-methylbut-2-enyl diphosphate site is built by serine 225, serine 226, asparagine 227, and serine 269. Residues serine 225, serine 226, asparagine 227, and serine 269 each contribute to the dimethylallyl diphosphate site. Residues serine 225, serine 226, asparagine 227, and serine 269 each coordinate isopentenyl diphosphate.

It belongs to the IspH family. Requires [4Fe-4S] cluster as cofactor.

The enzyme catalyses isopentenyl diphosphate + 2 oxidized [2Fe-2S]-[ferredoxin] + H2O = (2E)-4-hydroxy-3-methylbut-2-enyl diphosphate + 2 reduced [2Fe-2S]-[ferredoxin] + 2 H(+). It catalyses the reaction dimethylallyl diphosphate + 2 oxidized [2Fe-2S]-[ferredoxin] + H2O = (2E)-4-hydroxy-3-methylbut-2-enyl diphosphate + 2 reduced [2Fe-2S]-[ferredoxin] + 2 H(+). It functions in the pathway isoprenoid biosynthesis; dimethylallyl diphosphate biosynthesis; dimethylallyl diphosphate from (2E)-4-hydroxy-3-methylbutenyl diphosphate: step 1/1. It participates in isoprenoid biosynthesis; isopentenyl diphosphate biosynthesis via DXP pathway; isopentenyl diphosphate from 1-deoxy-D-xylulose 5-phosphate: step 6/6. In terms of biological role, catalyzes the conversion of 1-hydroxy-2-methyl-2-(E)-butenyl 4-diphosphate (HMBPP) into a mixture of isopentenyl diphosphate (IPP) and dimethylallyl diphosphate (DMAPP). Acts in the terminal step of the DOXP/MEP pathway for isoprenoid precursor biosynthesis. This chain is 4-hydroxy-3-methylbut-2-enyl diphosphate reductase, found in Mannheimia succiniciproducens (strain KCTC 0769BP / MBEL55E).